A 956-amino-acid chain; its full sequence is Glycine dehydrogenase (decarboxylating) (956 aa).

K697 carries the post-translational modification N6-(pyridoxal phosphate)lysine.

This sequence belongs to the GcvP family. The glycine cleavage system is composed of four proteins: P, T, L and H. The cofactor is pyridoxal 5'-phosphate.

It carries out the reaction N(6)-[(R)-lipoyl]-L-lysyl-[glycine-cleavage complex H protein] + glycine + H(+) = N(6)-[(R)-S(8)-aminomethyldihydrolipoyl]-L-lysyl-[glycine-cleavage complex H protein] + CO2. Its function is as follows. The glycine cleavage system catalyzes the degradation of glycine. The P protein binds the alpha-amino group of glycine through its pyridoxal phosphate cofactor; CO(2) is released and the remaining methylamine moiety is then transferred to the lipoamide cofactor of the H protein. The protein is Glycine dehydrogenase (decarboxylating) of Cereibacter sphaeroides (strain KD131 / KCTC 12085) (Rhodobacter sphaeroides).